Reading from the N-terminus, the 826-residue chain is Ribonucleases P/MRP protein subunit POP1 (826 aa).

Disordered regions lie at residues 1 to 24 and 49 to 91; these read MATT…PRKI and NKDF…SGGD. The short motif at 58–65 is the Nuclear localization signal element; the sequence is KRRRTNSY. Over residues 70-79 the composition is skewed to basic residues; it reads AKKRNIKRQK.

In terms of assembly, component of nuclear RNase P and RNase MRP ribonucleoproteins. RNase P consists of a catalytic RNA moiety and different protein chains. Several subunits of RNase P are also part of the RNase MRP complex. RNase MRP consists of a catalytic RNA moiety and several protein subunits.

Its subcellular location is the nucleus. The protein resides in the nucleolus. Functionally, component of ribonuclease P, a ribonucleoprotein complex that generates mature tRNA molecules by cleaving their 5'-ends. Also a component of the MRP ribonuclease complex, which cleaves pre-rRNA sequences. Required for rRNA maturation, including 5.8S rRNA processing. This chain is Ribonucleases P/MRP protein subunit POP1, found in Arabidopsis thaliana (Mouse-ear cress).